We begin with the raw amino-acid sequence, 185 residues long: Elongation factor P (185 aa).

The protein belongs to the elongation factor P family.

The protein resides in the cytoplasm. Its pathway is protein biosynthesis; polypeptide chain elongation. In terms of biological role, involved in peptide bond synthesis. Stimulates efficient translation and peptide-bond synthesis on native or reconstituted 70S ribosomes in vitro. Probably functions indirectly by altering the affinity of the ribosome for aminoacyl-tRNA, thus increasing their reactivity as acceptors for peptidyl transferase. The protein is Elongation factor P of Thermosynechococcus vestitus (strain NIES-2133 / IAM M-273 / BP-1).